A 701-amino-acid polypeptide reads, in one-letter code: 2-isopropylmalate synthase (701 aa).

The segment at methionine 1–serine 40 is disordered. The span at proline 31–serine 40 shows a compositional bias: polar residues. One can recognise a Pyruvate carboxyltransferase domain in the interval proline 72 to aspartate 346. Residues aspartate 81, histidine 285, histidine 287, and asparagine 321 each coordinate Mg(2+). The tract at residues proline 491–arginine 701 is regulatory domain. Residues valine 575–proline 593 form a VNTR1 repeat. Residues alanine 581–valine 670 form a disordered region. The VNTR2 repeat unit spans residues valine 594–proline 612. The VNTR3 repeat unit spans residues valine 613–proline 631. One copy of the VNTR4 repeat lies at valine 632–proline 650. The VNTR5 repeat unit spans residues valine 651–proline 669.

The protein belongs to the alpha-IPM synthase/homocitrate synthase family. LeuA type 2 subfamily. Homodimer. The cofactor is Mg(2+).

The protein resides in the cytoplasm. The enzyme catalyses 3-methyl-2-oxobutanoate + acetyl-CoA + H2O = (2S)-2-isopropylmalate + CoA + H(+). It functions in the pathway amino-acid biosynthesis; L-leucine biosynthesis; L-leucine from 3-methyl-2-oxobutanoate: step 1/4. In terms of biological role, catalyzes the condensation of the acetyl group of acetyl-CoA with 3-methyl-2-oxobutanoate (2-ketoisovalerate) to form 3-carboxy-3-hydroxy-4-methylpentanoate (2-isopropylmalate). This chain is 2-isopropylmalate synthase, found in Mycobacterium bovis (strain ATCC BAA-935 / AF2122/97).